A 405-amino-acid polypeptide reads, in one-letter code: Elongation factor Tu (405 aa).

The 206-residue stretch at 10 to 215 (KPHVNVGTIG…AVDSYIPTPE (206 aa)) folds into the tr-type G domain. The G1 stretch occupies residues 19-26 (GHVDHGKT). GTP is bound at residue 19 to 26 (GHVDHGKT). Residue T26 coordinates Mg(2+). Positions 61-65 (GITIN) are G2. The interval 82 to 85 (DCPG) is G3. Residues 82-86 (DCPGH) and 137-140 (NKVD) contribute to the GTP site. The G4 stretch occupies residues 137–140 (NKVD). Residues 175 to 177 (SAL) are G5.

Belongs to the TRAFAC class translation factor GTPase superfamily. Classic translation factor GTPase family. EF-Tu/EF-1A subfamily. As to quaternary structure, monomer.

It is found in the cytoplasm. It carries out the reaction GTP + H2O = GDP + phosphate + H(+). In terms of biological role, GTP hydrolase that promotes the GTP-dependent binding of aminoacyl-tRNA to the A-site of ribosomes during protein biosynthesis. The chain is Elongation factor Tu from Deinonema sp.